A 399-amino-acid polypeptide reads, in one-letter code: Phosphatidate cytidylyltransferase 5, chloroplastic (399 aa).

A chloroplast-targeting transit peptide spans 1-26 (MAPFVEVCRYKPLPLSLSSLCTCPCR). The next 6 membrane-spanning stretches (helical) occupy residues 123–143 (VGGI…AAVL), 187–207 (FGHI…ALLL), 217–237 (LSST…WVKL), 266–286 (VGLV…TFAF), 309–329 (AFAG…SLSW), and 333–353 (LVST…GDLT).

The protein belongs to the CDS family. Mg(2+) is required as a cofactor.

The protein localises to the plastid. It is found in the chloroplast membrane. It catalyses the reaction a 1,2-diacyl-sn-glycero-3-phosphate + CTP + H(+) = a CDP-1,2-diacyl-sn-glycerol + diphosphate. It functions in the pathway phospholipid metabolism; CDP-diacylglycerol biosynthesis; CDP-diacylglycerol from sn-glycerol 3-phosphate: step 3/3. Highest activities is obtained at about 30 mM CTP and 2 mM phosphatidic acid (PA). May be involved in the synthesis of minor phospholipids and in modulation of IP3-mediated signal transduction. Promotes the biosynthesis of plastidial phosphatidylglycerol (PG) which is required for structure and function of thylakoid membranes and, hence, for photoautotrophic growth. This is Phosphatidate cytidylyltransferase 5, chloroplastic from Arabidopsis thaliana (Mouse-ear cress).